The chain runs to 119 residues: uncharacterized protein (119 aa).

Residues 30–50 (LMTLPCVLFLSSFGQAVIVVL) form a helical membrane-spanning segment.

The protein resides in the membrane. This is an uncharacterized protein from Saccharomyces cerevisiae (strain ATCC 204508 / S288c) (Baker's yeast).